Consider the following 225-residue polypeptide: PKHD-type hydroxylase YbiX (225 aa).

The Fe2OG dioxygenase domain maps to 78–177 (TLSTPLFNRY…RVASFMWIQS (100 aa)). 3 residues coordinate Fe cation: H96, D98, and H158. Position 168 (R168) interacts with 2-oxoglutarate.

Requires Fe(2+) as cofactor. It depends on L-ascorbate as a cofactor.

This chain is PKHD-type hydroxylase YbiX, found in Escherichia coli O6:K15:H31 (strain 536 / UPEC).